Reading from the N-terminus, the 1034-residue chain is Sodium bicarbonate cotransporter 3 (1034 aa).

Disordered regions lie at residues 1–31 and 53–99; these read MEAD…KTSS and HVPF…SQRV. Over 1–476 the chain is Extracellular; sequence MEADGAGEQM…DFKDALSLQC (476 aa). A phosphoserine mark is found at S57, S60, S89, and S155. The segment covering 60–77 has biased composition (basic residues); sequence SRRRHKHRGHKHHHRRRK. Residues 78–90 are compositionally biased toward basic and acidic residues; the sequence is DKDSDKEDGRESP. N176 is a glycosylation site (N-linked (GlcNAc...) asparagine). Phosphoserine occurs at positions 238, 250, 260, 263, 268, and 271. The segment covering 250–260 has biased composition (polar residues); it reads SAPGNLDNSKS. The interval 250 to 276 is disordered; it reads SAPGNLDNSKSGEMKGNGSGGSRENST. N-linked (GlcNAc...) asparagine glycosylation is present at N274. S275 and S424 each carry phosphoserine. Residues 477–497 traverse the membrane as a helical segment; it reads LASILFLYCACMSPVITFGGL. Residues 498-505 lie on the Cytoplasmic side of the membrane; sequence LGEATEGR. Residues 506–526 traverse the membrane as a helical segment; the sequence is ISAIESLFGASLTGIAYSLFA. The Extracellular portion of the chain corresponds to 527–563; it reads GQPLTILGSTGPVLVFEKILFKFCRDYHLSYLSLRTS. Residues 564 to 584 form a helical membrane-spanning segment; it reads IGLWTSFLCIVLVATDASSLV. Over 585–593 the chain is Cytoplasmic; that stretch reads CYITRFTEE. A helical membrane pass occupies residues 594–614; it reads AFAALICIIFIYEALEKLFHL. At 615–685 the chain is on the extracellular side; it reads GEIYAFNMHN…MFVGSACGPH (71 aa). A disulfide bond links C634 and C636. N644, N654, and N664 each carry an N-linked (GlcNAc...) asparagine glycan. A disulfide bridge connects residues C670 and C682. A helical transmembrane segment spans residues 686-706; the sequence is GPYVPDVLFWCVVLFFTTFFL. Residues 707–729 lie on the Cytoplasmic side of the membrane; that stretch reads SSFLKQFKTKGYFPTKVRSTISD. Residues 730-750 form a helical membrane-spanning segment; that stretch reads FAVFLTIVIMVAIDYLVGIPS. Over 751 to 776 the chain is Extracellular; it reads PKLHVPEKFEPTDPSRGWIISPLGDN. Residues 777 to 797 traverse the membrane as a helical segment; it reads PWWTLLIAAVPALLCTILIFM. Residues 798–812 lie on the Cytoplasmic side of the membrane; sequence DQQITAVIINRKEHK. The helical transmembrane segment at 813-833 threads the bilayer; sequence LKFIPMPVLYGVFLYMGVSSL. Positions 815–915 are essential for cell membrane localization and transport activity; the sequence is FIPMPVLYGV…MDLCFTKREL (101 aa). At 834 to 876 the chain is on the extracellular side; sequence KGIQFFDRIKLFGMPAKHQPDLIYLRYVPLWKVHVFTVVQLTC. A helical membrane pass occupies residues 877–897; sequence LVLLWVIKASAAAVVFPMMVL. The Cytoplasmic segment spans residues 898–1034; that stretch reads ALVFVRKLMD…KKYMDAETSL (137 aa). The segment at 918–920 is CA2-binding; that stretch reads LDD. The interval 926 to 946 is disordered; it reads KKKKEDDKKKKEKEEAERMLQ. T951 is modified (phosphothreonine). A phosphoserine mark is found at S960 and S1033. The PDZ-binding signature appears at 1031–1034; the sequence is ETSL.

The protein belongs to the anion exchanger (TC 2.A.31) family. Forms a complex with ATP6V1B1 and NHERF1/EBP50. Interacts in a pH dependent-manner with CA2/carbonic anhydrase 2. Interacts with CFTR through NHERF1/EBP50. Interacts with USH1C. Expressed in the spiral ligament throughout the cochlea and in photoreceptors of the outer plexiform layer of the retina (at protein level).

It localises to the basolateral cell membrane. Its subcellular location is the apical cell membrane. It is found in the cell projection. The protein localises to the stereocilium. The protein resides in the cell membrane. The enzyme catalyses hydrogencarbonate(in) + Na(+)(in) = hydrogencarbonate(out) + Na(+)(out). With respect to regulation, activity is inhibited by 4,4'-di-isothiocyanatostilbene-2,2'-disulfonic acid (DIDS - an inhibitor of several anion channels and transporters). Functionally, electroneutral sodium- and bicarbonate-dependent cotransporter with a Na(+):HCO3(-) 1:1 stoichiometry. Mediates the sodium-dependent bicarbonate transport important for pH recovery after acid load as well as for regulation of steady-state pH in the duodenum and vascular smooth muscle cells. Plays a key role in macrophage acidification, mediating bicarbonate import into the cytoplasm which is crucial for net acid extrusion and maintenance of cytoplasmic pH during phagocytosis. Provides cellular bicarbonate for de novo purine and pyrimidine synthesis and is a key mediator of de novo nucleotide synthesis downstream of mTORC1 signaling in proliferating cells. May be involved in maintaining locomotor activity, exploratory behavior, and hearing. The sequence is that of Sodium bicarbonate cotransporter 3 (Slc4a7) from Mus musculus (Mouse).